Reading from the N-terminus, the 350-residue chain is Nicotinate-nucleotide--dimethylbenzimidazole phosphoribosyltransferase (350 aa).

The active-site Proton acceptor is Glu318.

This sequence belongs to the CobT family.

The catalysed reaction is 5,6-dimethylbenzimidazole + nicotinate beta-D-ribonucleotide = alpha-ribazole 5'-phosphate + nicotinate + H(+). Its pathway is nucleoside biosynthesis; alpha-ribazole biosynthesis; alpha-ribazole from 5,6-dimethylbenzimidazole: step 1/2. Catalyzes the synthesis of alpha-ribazole-5'-phosphate from nicotinate mononucleotide (NAMN) and 5,6-dimethylbenzimidazole (DMB). In Citrifermentans bemidjiense (strain ATCC BAA-1014 / DSM 16622 / JCM 12645 / Bem) (Geobacter bemidjiensis), this protein is Nicotinate-nucleotide--dimethylbenzimidazole phosphoribosyltransferase.